The primary structure comprises 260 residues: Octanoyltransferase (260 aa).

The BPL/LPL catalytic domain occupies 42–241; the sequence is PQVPDGLLLL…SFCQVFGLQA (200 aa). Residues 97 to 104, 172 to 174, and 185 to 187 contribute to the substrate site; these read RGGEVTYH, AIG, and GFA. Cys203 functions as the Acyl-thioester intermediate in the catalytic mechanism.

Belongs to the LipB family.

The protein localises to the cytoplasm. It catalyses the reaction octanoyl-[ACP] + L-lysyl-[protein] = N(6)-octanoyl-L-lysyl-[protein] + holo-[ACP] + H(+). It participates in protein modification; protein lipoylation via endogenous pathway; protein N(6)-(lipoyl)lysine from octanoyl-[acyl-carrier-protein]: step 1/2. In terms of biological role, catalyzes the transfer of endogenously produced octanoic acid from octanoyl-acyl-carrier-protein onto the lipoyl domains of lipoate-dependent enzymes. Lipoyl-ACP can also act as a substrate although octanoyl-ACP is likely to be the physiological substrate. The sequence is that of Octanoyltransferase from Synechococcus sp. (strain JA-3-3Ab) (Cyanobacteria bacterium Yellowstone A-Prime).